Reading from the N-terminus, the 127-residue chain is Large ribosomal subunit protein bL12 (127 aa).

This sequence belongs to the bacterial ribosomal protein bL12 family. As to quaternary structure, homodimer. Part of the ribosomal stalk of the 50S ribosomal subunit. Forms a multimeric L10(L12)X complex, where L10 forms an elongated spine to which 2 to 4 L12 dimers bind in a sequential fashion. Binds GTP-bound translation factors.

Its function is as follows. Forms part of the ribosomal stalk which helps the ribosome interact with GTP-bound translation factors. Is thus essential for accurate translation. The chain is Large ribosomal subunit protein bL12 from Carboxydothermus hydrogenoformans (strain ATCC BAA-161 / DSM 6008 / Z-2901).